The chain runs to 190 residues: UPF0200 protein TSIB_0920 (190 aa).

Position 7–14 (7–14 (GMPGSGKG)) interacts with ATP.

It belongs to the UPF0200 family.

The protein is UPF0200 protein TSIB_0920 of Thermococcus sibiricus (strain DSM 12597 / MM 739).